A 120-amino-acid chain; its full sequence is Large ribosomal subunit protein bL20 (120 aa).

It belongs to the bacterial ribosomal protein bL20 family.

Binds directly to 23S ribosomal RNA and is necessary for the in vitro assembly process of the 50S ribosomal subunit. It is not involved in the protein synthesizing functions of that subunit. The chain is Large ribosomal subunit protein bL20 from Chlamydia abortus (strain DSM 27085 / S26/3) (Chlamydophila abortus).